Here is a 159-residue protein sequence, read N- to C-terminus: uncharacterized protein (159 aa).

The first 20 residues, 1-20, serve as a signal peptide directing secretion; that stretch reads MKKIIAMSLLMFSVVMSVNA.

This is an uncharacterized protein from Pasteurella multocida (strain Pm70).